The following is a 470-amino-acid chain: Glutamate--tRNA ligase (470 aa).

A 'HIGH' region motif is present at residues 9–19 (PSPTGFLHVGG). Residues 236 to 240 (RLSKR) carry the 'KMSKS' region motif. Lys239 provides a ligand contact to ATP.

It belongs to the class-I aminoacyl-tRNA synthetase family. Glutamate--tRNA ligase type 1 subfamily. In terms of assembly, monomer.

It is found in the cytoplasm. The catalysed reaction is tRNA(Glu) + L-glutamate + ATP = L-glutamyl-tRNA(Glu) + AMP + diphosphate. In terms of biological role, catalyzes the attachment of glutamate to tRNA(Glu) in a two-step reaction: glutamate is first activated by ATP to form Glu-AMP and then transferred to the acceptor end of tRNA(Glu). The polypeptide is Glutamate--tRNA ligase (Legionella pneumophila (strain Corby)).